Reading from the N-terminus, the 344-residue chain is MDENRSKALAAALSQIEKQFGKGSIMRMGDTDVAADIQAVSTGSLGLDIALGIGGLPRGRIVEIYGPESSGKTTLTLSVIAQMQKLGGTAAFIDAEHALDPVYAQKLGVNVSDLLISQPDTGEQALEIADMLVRSGSVDVVVVDSVAALTPKAEIEGEMGDSHMGLQARLMSQALRKLTANIKRTNTLVIFINQIRMKIGLMFGNPETTTGGNALKFYASVRLDIRRTGAIKKGDEVTGSETRVKVVKNNVAPPFKLAEFDILYGEGISREGEIIELGVNLKLIEKAGAWYSYKGEKIGQGKDNAREFLREHPEIANEIDAKIREHSNLANAAMTTAPDEESDE.

Residue 66–73 (GPESSGKT) participates in ATP binding.

It belongs to the RecA family.

It is found in the cytoplasm. In terms of biological role, can catalyze the hydrolysis of ATP in the presence of single-stranded DNA, the ATP-dependent uptake of single-stranded DNA by duplex DNA, and the ATP-dependent hybridization of homologous single-stranded DNAs. It interacts with LexA causing its activation and leading to its autocatalytic cleavage. The protein is Protein RecA of Methylobacillus flagellatus.